The primary structure comprises 323 residues: Beta-ketoacyl-[acyl-carrier-protein] synthase III (323 aa).

Active-site residues include Cys114 and His250. The interval 251–255 (QANIR) is ACP-binding. Asn280 is a catalytic residue.

It belongs to the thiolase-like superfamily. FabH family. As to quaternary structure, homodimer.

It is found in the cytoplasm. It catalyses the reaction malonyl-[ACP] + acetyl-CoA + H(+) = 3-oxobutanoyl-[ACP] + CO2 + CoA. The protein operates within lipid metabolism; fatty acid biosynthesis. Catalyzes the condensation reaction of fatty acid synthesis by the addition to an acyl acceptor of two carbons from malonyl-ACP. Catalyzes the first condensation reaction which initiates fatty acid synthesis and may therefore play a role in governing the total rate of fatty acid production. Possesses both acetoacetyl-ACP synthase and acetyl transacylase activities. Its substrate specificity determines the biosynthesis of branched-chain and/or straight-chain of fatty acids. The polypeptide is Beta-ketoacyl-[acyl-carrier-protein] synthase III (Ruegeria sp. (strain TM1040) (Silicibacter sp.)).